The chain runs to 389 residues: 5-hydroxytryptamine receptor 1B (389 aa).

The tract at residues 1–27 is disordered; the sequence is MEAAGAPCAPPPPAGSQTGAPPANLSS. The Extracellular segment spans residues 1-45; it reads MEAAGAPCAPPPPAGSQTGAPPANLSSAPHNCSAEGYIYQDSVAL. Positions 16–27 are enriched in polar residues; the sequence is SQTGAPPANLSS. Residues Asn-24 and Asn-31 are each glycosylated (N-linked (GlcNAc...) asparagine). Residues 46 to 71 traverse the membrane as a helical segment; the sequence is PWKVLLVILLALITLATTLSNAFVIA. Residues 72-85 are Cytoplasmic-facing; sequence TVYRTRKLHTPANY. Residues 86–110 form a helical membrane-spanning segment; that stretch reads LIASLAVTDLLVSILVMPISTMYTV. Residues 111–118 lie on the Extracellular side of the membrane; sequence TGRWTLGQ. A helical membrane pass occupies residues 119 to 144; that stretch reads VVCDLWLSSDITCCTASILHLCVIAL. Residues Cys-121 and Cys-198 are joined by a disulfide bond. Asp-128 and Thr-133 together coordinate ergotamine. The DRY motif; important for ligand-induced conformation changes and signaling signature appears at 145-147; it reads DRY. Topologically, residues 145 to 164 are cytoplasmic; the sequence is DRYWAITDAVEYSAKRTPKR. Residues 165-183 form a helical membrane-spanning segment; sequence AAVMIALVWVFSISISLPP. Residues 184–204 lie on the Extracellular side of the membrane; sequence FFWRQAKAEEEVSDCVVNTDH. Val-200 contacts ergotamine. The chain crosses the membrane as a helical span at residues 205–228; the sequence is ILYTVYSTVGAFYFPTLLLIALYG. Topologically, residues 229–314 are cytoplasmic; it reads RIYVEARSRI…AARERKATKT (86 aa). The span at 258 to 271 shows a compositional bias: polar residues; sequence DSPGSTSSVTSVNS. The segment at 258-281 is disordered; sequence DSPGSTSSVTSVNSRAPDVPSESG. A helical membrane pass occupies residues 315 to 336; that stretch reads LGIILGAFIVCWLPFFIISLVM. At 337–346 the chain is on the extracellular side; sequence PICKDACWFH. Residues 347-369 traverse the membrane as a helical segment; that stretch reads LAIFDFFTWLGYLNSLINPIIYT. Positions 364–368 match the NPxxY motif; important for ligand-induced conformation changes and signaling motif; sequence NPIIY. The Cytoplasmic portion of the chain corresponds to 370–389; that stretch reads MSNEDFKQAFHKLIRFKCAG. Cys-387 carries S-palmitoyl cysteine lipidation.

The protein belongs to the G-protein coupled receptor 1 family. Homodimer. Heterodimer with HTR1D. Phosphorylated. Desensitization of the receptor may be mediated by its phosphorylation. Post-translationally, palmitoylated.

The protein resides in the cell membrane. Its function is as follows. G-protein coupled receptor for 5-hydroxytryptamine (serotonin). Also functions as a receptor for ergot alkaloid derivatives, various anxiolytic and antidepressant drugs and other psychoactive substances, such as lysergic acid diethylamide (LSD). Ligand binding causes a conformation change that triggers signaling via guanine nucleotide-binding proteins (G proteins) and modulates the activity of downstream effectors, such as adenylate cyclase. HTR1B is coupled to G(i)/G(o) G alpha proteins and mediates inhibitory neurotransmission by inhibiting adenylate cyclase activity. Arrestin family members inhibit signaling via G proteins and mediate activation of alternative signaling pathways. Regulates the release of 5-hydroxytryptamine, dopamine and acetylcholine in the brain, and thereby affects neural activity, nociceptive processing, pain perception, mood and behavior. Besides, plays a role in vasoconstriction of cerebral arteries. The sequence is that of 5-hydroxytryptamine receptor 1B (HTR1B) from Canis lupus familiaris (Dog).